A 474-amino-acid chain; its full sequence is Replication factor C large subunit (474 aa).

ATP is bound at residue 45–52 (GPPGCGKT). Positions 415-468 (DKKTNNKKGKENKTKNTTKKIKEIKETPKKEEVKEPKKQIEKQKSEKKEPKKQM) are enriched in basic and acidic residues. A disordered region spans residues 415-474 (DKKTNNKKGKENKTKNTTKKIKEIKETPKKEEVKEPKKQIEKQKSEKKEPKKQMTLESFF).

The protein belongs to the activator 1 small subunits family. RfcL subfamily. As to quaternary structure, heteromultimer composed of small subunits (RfcS) and large subunits (RfcL).

Its function is as follows. Part of the RFC clamp loader complex which loads the PCNA sliding clamp onto DNA. The chain is Replication factor C large subunit from Methanococcus aeolicus (strain ATCC BAA-1280 / DSM 17508 / OCM 812 / Nankai-3).